The primary structure comprises 483 residues: Altronate oxidoreductase (483 aa).

Residue 18-29 (IIQFGEGNFLRA) coordinates NAD(+).

This sequence belongs to the mannitol dehydrogenase family. UxaB subfamily.

It catalyses the reaction D-altronate + NAD(+) = keto-D-tagaturonate + NADH + H(+). It participates in carbohydrate metabolism; pentose and glucuronate interconversion. The chain is Altronate oxidoreductase from Escherichia coli O1:K1 / APEC.